A 553-amino-acid chain; its full sequence is Putative transport protein KPN78578_40470 (553 aa).

5 helical membrane-spanning segments follow: residues 4 to 24, 28 to 48, 65 to 85, 95 to 115, and 158 to 178; these read IALT…IGNV, GVGF…HFVD, FGLI…FFAS, LFAI…HKLF, and MSYA…MWLV. RCK C-terminal domains lie at 192–276 and 279–361; these read RFEE…VIGQ and ATSL…ELGN. Transmembrane regions (helical) follow at residues 371–391, 403–425, 437–457, 464–484, 493–513, and 532–552; these read MLPV…PLFI, AGGP…LYWF, LGIV…FVAT, LSWI…VGVL, YLTL…LAFA, and PLVM…FWGL.

The protein belongs to the AAE transporter (TC 2.A.81) family. YidE subfamily.

The protein localises to the cell membrane. This is Putative transport protein KPN78578_40470 from Klebsiella pneumoniae subsp. pneumoniae (strain ATCC 700721 / MGH 78578).